Consider the following 754-residue polypeptide: Disintegrin and metalloproteinase domain-containing protein 7 (754 aa).

Positions 1 to 18 (MLPGCIFLMILLIPQVKE) are cleaved as a signal peptide. Positions 19-176 (KFILGVEGQQ…NYSCTELNFT (158 aa)) are excised as a propeptide. Topologically, residues 19–668 (KFILGVEGQQ…ACEETLHVTN (650 aa)) are extracellular. 4 N-linked (GlcNAc...) asparagine glycosylation sites follow: N84, N167, N174, and N184. In terms of domain architecture, Peptidase M12B spans 199–394 (KYVELFIVAD…YKPTCMLNIP (196 aa)). 4 disulfide bridges follow: C310-C389, C350-C373, C352-C357, and C460-C480. In terms of domain architecture, Disintegrin spans 402–488 (FQFCGNKKLD…ACPKDQFRVN (87 aa)). Residues N584 and N668 are each glycosylated (N-linked (GlcNAc...) asparagine). A helical transmembrane segment spans residues 669-689 (ITILVVVLVLVIVGIGVLILL). Residues 690-754 (VRYRKCIKLK…GIADPNQSAK (65 aa)) are Cytoplasmic-facing.

In terms of assembly, interacts with ITM2B in sperm; the interaction increases following capacitation. Interacts with HSPA5 and CANX.

Its subcellular location is the membrane. In terms of biological role, required for normal male fertility via maintenance of epithelial cell morphology in the caput epididymis and subsequently correct epididymis lumen structure required for sperm development. Plays a role in sperm motility, flagella morphology and tyrosine phosphorylation during sperm capacitance. Plays a role in normal expression levels of HSPA5, ITM2B and ADAM2 in sperm both prior to and post-capacitation. This is a non catalytic metalloprotease-like protein. The protein is Disintegrin and metalloproteinase domain-containing protein 7 of Homo sapiens (Human).